A 297-amino-acid chain; its full sequence is Zinc finger protein 784 (297 aa).

The segment covering 1–12 has biased composition (pro residues); it reads MAAARPDPPIPS. Residues 1-39 form a disordered region; the sequence is MAAARPDPPIPSSPTRESPSPEPPDLVLVPDGRPVTPPG. A Phosphoserine modification is found at serine 13. 3 consecutive C2H2-type zinc fingers follow at residues 64–86, 100–122, and 128–150; these read FHCA…EHGH, SRCH…YSLH, and YRCS…QHRH. Residues 149–175 are disordered; sequence RHGVEPGTSERLLPTTTTGQPNSRVAQ. The segment covering 162–173 has biased composition (polar residues); it reads PTTTTGQPNSRV. 3 C2H2-type zinc fingers span residues 195–217, 223–245, and 251–273; these read FACR…ERVH, YHCS…ARIH, and FRCM…QRTH. A disordered region spans residues 268-297; sequence KHQRTHFHGPGSGVGESRGQLRSSSVSQES. Positions 287–297 are enriched in polar residues; the sequence is QLRSSSVSQES.

The protein belongs to the krueppel C2H2-type zinc-finger protein family.

It is found in the nucleus. Functionally, may be involved in transcriptional regulation. This is Zinc finger protein 784 (Znf784) from Mus musculus (Mouse).